A 364-amino-acid polypeptide reads, in one-letter code: Aminomethyltransferase (364 aa).

The protein belongs to the GcvT family. As to quaternary structure, the glycine cleavage system is composed of four proteins: P, T, L and H.

It carries out the reaction N(6)-[(R)-S(8)-aminomethyldihydrolipoyl]-L-lysyl-[protein] + (6S)-5,6,7,8-tetrahydrofolate = N(6)-[(R)-dihydrolipoyl]-L-lysyl-[protein] + (6R)-5,10-methylene-5,6,7,8-tetrahydrofolate + NH4(+). Its function is as follows. The glycine cleavage system catalyzes the degradation of glycine. The sequence is that of Aminomethyltransferase from Escherichia coli O157:H7.